A 421-amino-acid chain; its full sequence is Gamma-glutamyl phosphate reductase (421 aa).

It belongs to the gamma-glutamyl phosphate reductase family.

The protein localises to the cytoplasm. It carries out the reaction L-glutamate 5-semialdehyde + phosphate + NADP(+) = L-glutamyl 5-phosphate + NADPH + H(+). It participates in amino-acid biosynthesis; L-proline biosynthesis; L-glutamate 5-semialdehyde from L-glutamate: step 2/2. In terms of biological role, catalyzes the NADPH-dependent reduction of L-glutamate 5-phosphate into L-glutamate 5-semialdehyde and phosphate. The product spontaneously undergoes cyclization to form 1-pyrroline-5-carboxylate. The sequence is that of Gamma-glutamyl phosphate reductase from Brucella melitensis biotype 1 (strain ATCC 23456 / CCUG 17765 / NCTC 10094 / 16M).